Consider the following 78-residue polypeptide: Hainantoxin-XX.3 (78 aa).

Positions 1-23 (MKSATLLALSFLLIASCFLICEA) are cleaved as a signal peptide. The propeptide occupies 24–47 (EHSRYEEHEILEENMGDVVNLEQR). Intrachain disulfides connect C49/C62, C56/C66, and C61/C77.

It belongs to the hainantoxin family. 20 subfamily. In terms of tissue distribution, expressed by the venom gland.

It is found in the secreted. In terms of biological role, putative ion channel inhibitor. The sequence is that of Hainantoxin-XX.3 from Cyriopagopus hainanus (Chinese bird spider).